We begin with the raw amino-acid sequence, 78 residues long: UPF0154 protein lp_2061 (78 aa).

A helical transmembrane segment spans residues 5–27; it reads TGIWILIVVIGVLVGLTGGFFGA.

Belongs to the UPF0154 family.

It localises to the membrane. This Lactiplantibacillus plantarum (strain ATCC BAA-793 / NCIMB 8826 / WCFS1) (Lactobacillus plantarum) protein is UPF0154 protein lp_2061.